The following is a 100-amino-acid chain: Urease subunit gamma (100 aa).

The protein belongs to the urease gamma subunit family. As to quaternary structure, heterotrimer of UreA (gamma), UreB (beta) and UreC (alpha) subunits. Three heterotrimers associate to form the active enzyme.

The protein localises to the cytoplasm. It catalyses the reaction urea + 2 H2O + H(+) = hydrogencarbonate + 2 NH4(+). It functions in the pathway nitrogen metabolism; urea degradation; CO(2) and NH(3) from urea (urease route): step 1/1. The sequence is that of Urease subunit gamma from Mycolicibacterium vanbaalenii (strain DSM 7251 / JCM 13017 / BCRC 16820 / KCTC 9966 / NRRL B-24157 / PYR-1) (Mycobacterium vanbaalenii).